The sequence spans 118 residues: MVRATNAVASHRRKKRLFKLAKGFVGDRKNHLRLTSGAVMRAMAYNYAHRKQKKRDFRSLWIMRLNAAARINGISYSKFIYGLKKAQCELDRKVLADMAIRDPGSFAAIVGFAKEALA.

The protein belongs to the bacterial ribosomal protein bL20 family.

Functionally, binds directly to 23S ribosomal RNA and is necessary for the in vitro assembly process of the 50S ribosomal subunit. It is not involved in the protein synthesizing functions of that subunit. The polypeptide is Large ribosomal subunit protein bL20 (Protochlamydia amoebophila (strain UWE25)).